The chain runs to 570 residues: NADH-ubiquinone oxidoreductase chain 5 (570 aa).

The next 16 helical transmembrane spans lie at 2–22 (FSFF…FKHF), 27–47 (GVFL…LSNL), 56–76 (LIAI…VNFS), 77–97 (FYID…GVFV), 109–129 (PHIS…IILV), 134–154 (LVVF…LINF), 179–199 (VLIA…EAIL), 221–241 (LISF…GFHV), 251–271 (VPAS…FLIM), 285–305 (LVTA…AVFQ), 311–330 (ILAY…CSFG), 335–357 (VIVY…GNLI), 380–400 (FFFL…FGFY), 417–437 (AIFC…FNIL), 476–496 (IFLL…FYLL), and 524–544 (LLNY…LVLF).

It belongs to the complex I subunit 5 family.

Its subcellular location is the mitochondrion inner membrane. The enzyme catalyses a ubiquinone + NADH + 5 H(+)(in) = a ubiquinol + NAD(+) + 4 H(+)(out). Functionally, core subunit of the mitochondrial membrane respiratory chain NADH dehydrogenase (Complex I) that is believed to belong to the minimal assembly required for catalysis. Complex I functions in the transfer of electrons from NADH to the respiratory chain. The immediate electron acceptor for the enzyme is believed to be ubiquinone. The polypeptide is NADH-ubiquinone oxidoreductase chain 5 (ND5) (Paramecium tetraurelia).